Reading from the N-terminus, the 215-residue chain is Calmodulin-like protein 5 (215 aa).

Residues 38-61 (KNSPPSPSTMLPSPSSSSAPTKRI) form a disordered region. Residues 45–57 (STMLPSPSSSSAP) show a composition bias toward low complexity. 4 EF-hand domains span residues 61–96 (IDPSELKRVFQMFDKNGDGRITKEELNDSLENLGIY), 97–132 (IPDKDLTQMIHKIDANGDGCVDIDEFESLYSSIVDE), 139–174 (TEEEDMKDAFNVFDQDGDGFITVEELKSVMASLGLK), and 177–212 (KTLDGCKKMIMQVDADGDGRVNYKEFLQMMKGGGFS). Ca(2+) contacts are provided by aspartate 74, asparagine 76, aspartate 78, arginine 80, glutamate 85, aspartate 110, asparagine 112, aspartate 114, cysteine 116, glutamate 121, aspartate 152, aspartate 154, aspartate 156, glutamate 163, aspartate 190, aspartate 192, aspartate 194, arginine 196, and glutamate 201.

The protein belongs to the calmodulin family.

Functionally, potential calcium sensor. The polypeptide is Calmodulin-like protein 5 (CML5) (Arabidopsis thaliana (Mouse-ear cress)).